Reading from the N-terminus, the 113-residue chain is Large ribosomal subunit protein bL19 (113 aa).

The protein belongs to the bacterial ribosomal protein bL19 family.

This protein is located at the 30S-50S ribosomal subunit interface and may play a role in the structure and function of the aminoacyl-tRNA binding site. The protein is Large ribosomal subunit protein bL19 of Desulfitobacterium hafniense (strain DSM 10664 / DCB-2).